We begin with the raw amino-acid sequence, 427 residues long: Glutamate-1-semialdehyde 2,1-aminomutase (427 aa).

K265 carries the N6-(pyridoxal phosphate)lysine modification.

This sequence belongs to the class-III pyridoxal-phosphate-dependent aminotransferase family. HemL subfamily. In terms of assembly, homodimer. The cofactor is pyridoxal 5'-phosphate.

The protein localises to the cytoplasm. It catalyses the reaction (S)-4-amino-5-oxopentanoate = 5-aminolevulinate. It participates in porphyrin-containing compound metabolism; protoporphyrin-IX biosynthesis; 5-aminolevulinate from L-glutamyl-tRNA(Glu): step 2/2. In Idiomarina loihiensis (strain ATCC BAA-735 / DSM 15497 / L2-TR), this protein is Glutamate-1-semialdehyde 2,1-aminomutase.